We begin with the raw amino-acid sequence, 160 residues long: Lipoprotein signal peptidase (160 aa).

The next 3 helical transmembrane spans lie at 6–26 (VWSS…IKYL), 58–78 (LAWL…AFVL), and 95–115 (FALV…HGYV). Residues Asp-117 and Asp-135 contribute to the active site. A helical transmembrane segment spans residues 127 to 147 (SFAVFNLADAFITIGAGLIIL).

This sequence belongs to the peptidase A8 family.

The protein localises to the cell inner membrane. The catalysed reaction is Release of signal peptides from bacterial membrane prolipoproteins. Hydrolyzes -Xaa-Yaa-Zaa-|-(S,diacylglyceryl)Cys-, in which Xaa is hydrophobic (preferably Leu), and Yaa (Ala or Ser) and Zaa (Gly or Ala) have small, neutral side chains.. Its pathway is protein modification; lipoprotein biosynthesis (signal peptide cleavage). Its function is as follows. This protein specifically catalyzes the removal of signal peptides from prolipoproteins. This chain is Lipoprotein signal peptidase, found in Brucella abortus (strain S19).